The primary structure comprises 367 residues: tRNA-specific 2-thiouridylase MnmA (367 aa).

ATP contacts are provided by residues 14–21 and Leu-40; that span reads AMSGGVDS. Catalysis depends on Cys-108, which acts as the Nucleophile. Cys-108 and Cys-204 are oxidised to a cystine. Gly-132 provides a ligand contact to ATP. Residues 154–156 are interaction with tRNA; that stretch reads KDQ. The Cysteine persulfide intermediate role is filled by Cys-204.

It belongs to the MnmA/TRMU family.

The protein localises to the cytoplasm. The enzyme catalyses S-sulfanyl-L-cysteinyl-[protein] + uridine(34) in tRNA + AH2 + ATP = 2-thiouridine(34) in tRNA + L-cysteinyl-[protein] + A + AMP + diphosphate + H(+). Its function is as follows. Catalyzes the 2-thiolation of uridine at the wobble position (U34) of tRNA, leading to the formation of s(2)U34. The protein is tRNA-specific 2-thiouridylase MnmA of Rickettsia bellii (strain OSU 85-389).